A 270-amino-acid chain; its full sequence is Shikimate dehydrogenase (NADP(+)) (270 aa).

Residues 14–16 and Thr60 each bind shikimate; that span reads SKS. The Proton acceptor role is filled by Lys64. Glu76 serves as a coordination point for NADP(+). Shikimate is bound by residues Asn85 and Asp101. Residues 125–129, 149–154, and Met213 each bind NADP(+); these read GAGGA and NRTASR. Tyr215 provides a ligand contact to shikimate. Gly236 serves as a coordination point for NADP(+).

It belongs to the shikimate dehydrogenase family. In terms of assembly, homodimer.

It catalyses the reaction shikimate + NADP(+) = 3-dehydroshikimate + NADPH + H(+). Its pathway is metabolic intermediate biosynthesis; chorismate biosynthesis; chorismate from D-erythrose 4-phosphate and phosphoenolpyruvate: step 4/7. Functionally, involved in the biosynthesis of the chorismate, which leads to the biosynthesis of aromatic amino acids. Catalyzes the reversible NADPH linked reduction of 3-dehydroshikimate (DHSA) to yield shikimate (SA). The chain is Shikimate dehydrogenase (NADP(+)) from Stutzerimonas stutzeri (strain A1501) (Pseudomonas stutzeri).